A 274-amino-acid chain; its full sequence is 2,3,4,5-tetrahydropyridine-2,6-dicarboxylate N-succinyltransferase (274 aa).

Arg-107 and Asp-144 together coordinate substrate.

This sequence belongs to the transferase hexapeptide repeat family. In terms of assembly, homotrimer.

The protein resides in the cytoplasm. It carries out the reaction (S)-2,3,4,5-tetrahydrodipicolinate + succinyl-CoA + H2O = (S)-2-succinylamino-6-oxoheptanedioate + CoA. It functions in the pathway amino-acid biosynthesis; L-lysine biosynthesis via DAP pathway; LL-2,6-diaminopimelate from (S)-tetrahydrodipicolinate (succinylase route): step 1/3. This chain is 2,3,4,5-tetrahydropyridine-2,6-dicarboxylate N-succinyltransferase, found in Cereibacter sphaeroides (strain ATCC 17023 / DSM 158 / JCM 6121 / CCUG 31486 / LMG 2827 / NBRC 12203 / NCIMB 8253 / ATH 2.4.1.) (Rhodobacter sphaeroides).